Here is a 219-residue protein sequence, read N- to C-terminus: Probable transcription factor At1g55950 (219 aa).

The tract at residues 9-77 is disordered; it reads ASHSLKSLMA…DEKMETEEEG (69 aa). The span at 17-30 shows a compositional bias: basic residues; that stretch reads MAKKNKRSQQKNKC. Over residues 31 to 48 the composition is skewed to basic and acidic residues; sequence LKPEKDPSTVKRLLEDPP. The span at 65–77 shows a compositional bias: acidic residues; that stretch reads YGDDEKMETEEEG.

Belongs to the GeBP family.

This chain is Probable transcription factor At1g55950, found in Arabidopsis thaliana (Mouse-ear cress).